The following is a 51-amino-acid chain: Epididymal sperm protein E (51 aa).

A zinc finger spans residues 8-39 (CVRCRRKTPSFNSKTVTFRNKRRAIRSHCAYC).

Sperm.

The protein resides in the nucleus. The sequence is that of Epididymal sperm protein E from Sepia officinalis (Common cuttlefish).